A 502-amino-acid chain; its full sequence is Packaging protein 1 (502 aa).

The segment at 99–122 (EAMEGQNPTCSRHESAYPIQSQVS) is disordered. 226–233 (GPTGCGKS) serves as a coordination point for ATP. A DNA-binding region spans residues 495 to 502 (RYYHSKKK).

This sequence belongs to the adenoviridae packaging protein 1 family. In terms of assembly, homodimer. Part of a genome packaging complex composed of packaging proteins 1, 2 and 3; this complex specifically binds to the packaging sequence on the left end of viral genomic DNA and performs packaging of the viral genome. Interacts with protein 33K.

It localises to the virion. Its subcellular location is the host nucleus. The protein resides in the host nucleoplasm. It is found in the host nucleolus. Component of the packaging machinery which encapsidates the viral DNA into preformed capsids and transcriptional activator of the viral major late promoter (MLP). Binds, along with packaging proteins 2 and 3, to the specific packaging sequence on the left end of viral genomic DNA and displays ATPase activity thereby providing the power stroke of the packaging machinery. The activity of packaging protein IVa2 is stimulated by protein 33K which acts as a terminase. May be the protein that pumps DNA into the capsid powered by ATP hydrolysis. Specifically binds to the 5'-CG-3' nucleotides of the repeats making up the packaging sequence. Component of the DEF-A and DEF-B transcription factors that bind downstream elements of the major late promoter (MLP), and stimulate transcription from the MLP after initiation of viral DNA replication. DEF-A is a heterodimer packaging proteins 1 and 2 and DEF-B is a homodimer of packaging protein 1. In Canis lupus familiaris (Dog), this protein is Packaging protein 1.